Here is a 97-residue protein sequence, read N- to C-terminus: YcgL domain-containing protein CPS_3517 (97 aa).

Positions 1 to 85 constitute a YcgL domain; the sequence is MLCAIYKSAR…PQEDLLKEHK (85 aa).

The chain is YcgL domain-containing protein CPS_3517 from Colwellia psychrerythraea (strain 34H / ATCC BAA-681) (Vibrio psychroerythus).